We begin with the raw amino-acid sequence, 360 residues long: N6-Methyl-AMP deaminase (360 aa).

2 residues coordinate Zn(2+): His23 and His25. Residues His25, Asn27, His73, 105 to 108, Asp147, and Gly180 contribute to the N(6)-methyl-AMP site; that span reads STPR. His207 contributes to the Zn(2+) binding site. Residues Glu210, Asp292, and Asp293 each contribute to the N(6)-methyl-AMP site. Glu210 serves as the catalytic Proton donor. Residue Asp292 participates in Zn(2+) binding.

This sequence belongs to the metallo-dependent hydrolases superfamily. Adenosine and AMP deaminases family. In terms of assembly, monomer. Requires Zn(2+) as cofactor.

The enzyme catalyses N(6)-methyl-AMP + H2O + H(+) = IMP + methylamine. Catalyzes the hydrolysis of the free cytosolic methylated adenosine nucleotide N(6)-methyl-AMP (N6-mAMP) to produce inositol monophosphate (IMP) and methylamine. Is required for the catabolism of cytosolic N6-mAMP, which is derived from the degradation of mRNA containing N6-methylated adenine (m6A). The polypeptide is N6-Methyl-AMP deaminase (Mapda) (Mus musculus (Mouse)).